The primary structure comprises 128 residues: Ribonuclease P protein component (128 aa).

This sequence belongs to the RnpA family. As to quaternary structure, consists of a catalytic RNA component (M1 or rnpB) and a protein subunit.

The catalysed reaction is Endonucleolytic cleavage of RNA, removing 5'-extranucleotides from tRNA precursor.. Its function is as follows. RNaseP catalyzes the removal of the 5'-leader sequence from pre-tRNA to produce the mature 5'-terminus. It can also cleave other RNA substrates such as 4.5S RNA. The protein component plays an auxiliary but essential role in vivo by binding to the 5'-leader sequence and broadening the substrate specificity of the ribozyme. The chain is Ribonuclease P protein component from Methylococcus capsulatus (strain ATCC 33009 / NCIMB 11132 / Bath).